The sequence spans 390 residues: S-adenosylmethionine synthase 2 (390 aa).

A Mg(2+)-binding site is contributed by Glu-9. His-15 lines the ATP pocket. K(+) is bound at residue Glu-43. The L-methionine site is built by Glu-56 and Gln-99. Residues 167–169 (DGK), 235–238 (SGRF), Asp-246, 252–253 (RK), Ala-269, Lys-273, and Lys-277 each bind ATP. Asp-246 provides a ligand contact to L-methionine. L-methionine is bound at residue Lys-277.

This sequence belongs to the AdoMet synthase family. As to quaternary structure, homotetramer. Mn(2+) serves as cofactor. The cofactor is Mg(2+). Co(2+) is required as a cofactor. Requires K(+) as cofactor.

It is found in the cytoplasm. It catalyses the reaction L-methionine + ATP + H2O = S-adenosyl-L-methionine + phosphate + diphosphate. The protein operates within amino-acid biosynthesis; S-adenosyl-L-methionine biosynthesis; S-adenosyl-L-methionine from L-methionine: step 1/1. Functionally, catalyzes the formation of S-adenosylmethionine from methionine and ATP. The reaction comprises two steps that are both catalyzed by the same enzyme: formation of S-adenosylmethionine (AdoMet) and triphosphate, and subsequent hydrolysis of the triphosphate. This chain is S-adenosylmethionine synthase 2 (METK2), found in Solanum tuberosum (Potato).